We begin with the raw amino-acid sequence, 185 residues long: Threonylcarbamoyl-AMP synthase (185 aa).

Positions 7 to 185 (AAQRRAARAH…IDFASGRVLR (179 aa)) constitute a YrdC-like domain.

Belongs to the SUA5 family. TsaC subfamily.

The protein resides in the cytoplasm. The enzyme catalyses L-threonine + hydrogencarbonate + ATP = L-threonylcarbamoyladenylate + diphosphate + H2O. Functionally, required for the formation of a threonylcarbamoyl group on adenosine at position 37 (t(6)A37) in tRNAs that read codons beginning with adenine. Catalyzes the conversion of L-threonine, HCO(3)(-)/CO(2) and ATP to give threonylcarbamoyl-AMP (TC-AMP) as the acyladenylate intermediate, with the release of diphosphate. The polypeptide is Threonylcarbamoyl-AMP synthase (Laribacter hongkongensis (strain HLHK9)).